A 164-amino-acid polypeptide reads, in one-letter code: Protein CURVATURE THYLAKOID 1A, chloroplastic (164 aa).

The transit peptide at 1–62 directs the protein to the chloroplast; the sequence is MAISVAASSS…LQKVELLKTR (62 aa). Position 63 is an N-acetylalanine (A63). At 63–93 the chain is on the stromal side; it reads ASSEETSSIDTNELITDLKEKWDGLENKSTV. A helical membrane pass occupies residues 94–114; the sequence is LIYGGGAIVAVWLSSIVVGAI. The Lumenal portion of the chain corresponds to 115–116; it reads NS. A helical membrane pass occupies residues 117 to 137; the sequence is VPLLPKVMELVGLGYTGWFVY. The Stromal portion of the chain corresponds to 138 to 164; it reads RYLLFKSSRKELAEDIESLKKKIAGSE. Positions 140–164 form a coiled coil; sequence LLFKSSRKELAEDIESLKKKIAGSE.

It belongs to the CURT family. In terms of assembly, homo- and heterodimers and trimers.

Its subcellular location is the plastid. The protein localises to the chloroplast. It localises to the plastoglobule. It is found in the membrane. The protein resides in the chloroplast thylakoid membrane. Its function is as follows. Determines thylakoid architecture by inducing membrane curvature. This is Protein CURVATURE THYLAKOID 1A, chloroplastic (CURT1A) from Arabidopsis thaliana (Mouse-ear cress).